Here is a 328-residue protein sequence, read N- to C-terminus: Alanine racemase (328 aa).

The active-site Proton acceptor; specific for D-alanine is K33. K33 carries the N6-(pyridoxal phosphate)lysine modification. R118 is a substrate binding site. The active-site Proton acceptor; specific for L-alanine is Y237. M283 provides a ligand contact to substrate.

It belongs to the alanine racemase family. It depends on pyridoxal 5'-phosphate as a cofactor.

The catalysed reaction is L-alanine = D-alanine. It functions in the pathway amino-acid biosynthesis; D-alanine biosynthesis; D-alanine from L-alanine: step 1/1. Functionally, catalyzes the interconversion of L-alanine and D-alanine. May also act on other amino acids. This Campylobacter jejuni subsp. doylei (strain ATCC BAA-1458 / RM4099 / 269.97) protein is Alanine racemase (alr).